The primary structure comprises 347 residues: Phosphoribosylformylglycinamidine cyclo-ligase (347 aa).

It belongs to the AIR synthase family.

The protein localises to the cytoplasm. The enzyme catalyses 2-formamido-N(1)-(5-O-phospho-beta-D-ribosyl)acetamidine + ATP = 5-amino-1-(5-phospho-beta-D-ribosyl)imidazole + ADP + phosphate + H(+). It participates in purine metabolism; IMP biosynthesis via de novo pathway; 5-amino-1-(5-phospho-D-ribosyl)imidazole from N(2)-formyl-N(1)-(5-phospho-D-ribosyl)glycinamide: step 2/2. The sequence is that of Phosphoribosylformylglycinamidine cyclo-ligase from Desulfatibacillum aliphaticivorans.